The sequence spans 93 residues: Ferredoxin-2 (93 aa).

The 2Fe-2S ferredoxin-type domain maps to 2-91 (YKVTLKTPDG…DVVIETHKED (90 aa)). Residues cysteine 37, cysteine 42, cysteine 45, and cysteine 75 each contribute to the [2Fe-2S] cluster site.

Belongs to the 2Fe2S plant-type ferredoxin family. [2Fe-2S] cluster is required as a cofactor.

Its subcellular location is the plastid. It localises to the chloroplast. Ferredoxins are iron-sulfur proteins that transfer electrons in a wide variety of metabolic reactions. This chain is Ferredoxin-2, found in Equisetum arvense (Field horsetail).